The primary structure comprises 106 residues: Large ribosomal subunit protein eL30 (106 aa).

This sequence belongs to the eukaryotic ribosomal protein eL30 family.

This chain is Large ribosomal subunit protein eL30 (rpl30e), found in Sulfurisphaera tokodaii (strain DSM 16993 / JCM 10545 / NBRC 100140 / 7) (Sulfolobus tokodaii).